Here is a 1472-residue protein sequence, read N- to C-terminus: MRRSNVVPVHSLTSSTNTGRDSRGEKYDELTPVATRRASISPDEARYLTQLASRDNAVSRVSTVADISLDDPALNPENKDFDLYKWLRKVVHVLNEEGVPRKEASIFFQHLRVSGTGAALQLQKTVADIITAPFRRETWNFRNKTSKTILHDFNGMLHSGELLIVLGRPGSGCSTFLKTLSGELHGLNVDEKTVLHYSGIPQSTMIKEFKGEVVYNQEVDKHFPHLTVGQTLEFAAAVRTPSKRLGGMSRNEYAQMMTKVVMAVFGLSHTYNTKVGNDTVRGVPGGERKRVSIAEMALAGAPLAAWDNSTRGLDSATALKFVESLRLAADLNSSAHAVAIYQASQAIYDLFDKAVVLYEGRQIYFGPASKAKAFFERQGWFCPPRQTTGDFLTSVTNPIERQARPGMESQVPRTAAEFEAYWLESEEYKELQREMAAFQGETSSQGNEKLLEFQQRKRLAQASHTRPKSPYLLSIPMQIKLNTKRAYQRVWNERTSTMTTFIGNTILALIVGSVFYGTPTATAGFYAKGATLFYAVLLNALTAMTEINSLYSQRPIVEKHASFAFYHPATEAIAGVVSDIPVKFLMAIAFNIILYFLSGLRREPSQFFIYFLITFIIMFVMSAVFRTMAAITRTVSQAMTLAGVLILMLVIYTGFVVPVNYMHPWFKWIHYLNPIFYAFEILIANEFHGREFTCSQFIPVYPNLPGDSFVCSSRGAVAGRRTVSGDAYIEASYSYSYSHVWRNFGILIAFLIGFMVIYFVATELNSATTSSAEVLVFRRGHEPAHLKNGHEPGADEEAGAGKTVVSSSAEENKQDQGITSIPPQQDIFTWRDVVYDIEIKGEPRRLLDHVSGWVKPGTLTALMGVSGAGKTTLLDVLAHRTTMGVITGDMFVNGKPLDSSFQRKTGYVQQQDLHLETATVRESLRFSAMLRQPASVSKEEKYAYVEEVIKMLNMEDFAEAVVGVPGEGLNVEQRKLLTIGVELAAKPKLLLFLDEPTSGLDSQSSWAICNFLRKLADAGQAILCTIHQPSAILFEQFDQLLFLARGGKTVYFGPIGENSQTLLKYFESHGPRRCGDQENPAEYMLEVVNAGTNPRGENWFDLWKASKEAAGVQAEIDRIHESKRGEAESKDSTNPKDREHEEFAMPFFKQLPIVTVRVFQQYWRLPMYIAAKMMLGICAGLFIGFSFFKADTSLQGMQNVIFSVFMLCAIFSSLVQQIIPLFITQRALYEVRERPSKTYSWKAFMIANIIVEIPYQILMGILVFGCYYYAVNGVQSSDRQGLVLLFCIQFFIYASTFADFVIAALPDAETAGAIVTLQFSMALTFNGVMQTPEALPGFWIFMYRVSPFTYWVGGMAATQLHGRAVKCSAAETAIFNPPSGLTCQEYMADYMAVAPGHLSNPNATSSCEFCSLSVADQYLASVNIYWSERWRNFGIFWAYVVFDIAVAVMLYYCFRVKKWNFSFGKRKKSKAA.

A disordered region spans residues 1–28 (MRRSNVVPVHSLTSSTNTGRDSRGEKYD). The ABC transporter 1 domain occupies 134–384 (FRRETWNFRN…FERQGWFCPP (251 aa)). 4 N-linked (GlcNAc...) asparagine glycosylation sites follow: asparagine 143, asparagine 277, asparagine 308, and asparagine 332. Transmembrane regions (helical) follow at residues 506 to 526 (ILAL…AGFY), 530 to 550 (ATLF…INSL), 580 to 600 (IPVK…LSGL), 605 to 625 (SQFF…SAVF), 639 to 659 (MTLA…VVPV), 664 to 684 (PWFK…ILIA), and 744 to 764 (FGIL…ATEL). A compositionally biased stretch (basic and acidic residues) spans 784-793 (AHLKNGHEPG). The interval 784-821 (AHLKNGHEPGADEEAGAGKTVVSSSAEENKQDQGITSI) is disordered. Positions 804-821 (VVSSSAEENKQDQGITSI) are enriched in polar residues. The 243-residue stretch at 828–1070 (FTWRDVVYDI…TLLKYFESHG (243 aa)) folds into the ABC transporter 2 domain. 864–871 (GVSGAGKT) is a binding site for ATP. 6 helical membrane passes run 1168–1188 (YIAA…FSFF), 1204–1224 (VFML…LFIT), 1244–1264 (FMIA…ILVF), 1282–1302 (LVLL…DFVI), 1309–1329 (ETAG…NGVM), and 1337–1357 (GFWI…GMAA). Asparagine 1402 carries an N-linked (GlcNAc...) asparagine glycan. Residues 1433 to 1453 (FGIFWAYVVFDIAVAVMLYYC) form a helical membrane-spanning segment. Asparagine 1460 carries N-linked (GlcNAc...) asparagine glycosylation.

Belongs to the ABC transporter superfamily. ABCG family. PDR (TC 3.A.1.205) subfamily.

It is found in the cell membrane. It carries out the reaction itraconazole(in) + ATP + H2O = itraconazole(out) + ADP + phosphate + H(+). The catalysed reaction is voriconazole(in) + ATP + H2O = voriconazole(out) + ADP + phosphate + H(+). The enzyme catalyses fluconazole(in) + ATP + H2O = fluconazole(out) + ADP + phosphate + H(+). Pleiotropic ABC efflux transporter involved in the basal level of azole susceptibility. Confers resistance to fluconazole, itraconazole and voriconazole. This Aspergillus fumigatus (strain ATCC MYA-4609 / CBS 101355 / FGSC A1100 / Af293) (Neosartorya fumigata) protein is ABC multidrug transporter atrI.